Reading from the N-terminus, the 53-residue chain is MFRWGIIFLVIALIAAALGFGGLAGTAAWAAKVVFVVGIVIFLISLFTGRKKL.

2 consecutive transmembrane segments (helical) span residues 4-24 (WGII…GGLA) and 27-47 (AAWA…ISLF).

It belongs to the UPF0391 family.

It localises to the cell membrane. This Erwinia tasmaniensis (strain DSM 17950 / CFBP 7177 / CIP 109463 / NCPPB 4357 / Et1/99) protein is UPF0391 membrane protein ETA_06630.